The following is a 95-amino-acid chain: Alpha-conotoxin-like Ms20.5 (95 aa).

A signal peptide spans 1–24; sequence MPKLAVVLLVLLILPLSYFDAAGG. Positions 25–45 are excised as a propeptide; sequence QAAEGDRRGNGLARYLQRGGR. A 4-carboxyglutamate modification is found at E50. P56 is subject to 4-hydroxyproline. Cystine bridges form between C64/C73, C69/C81, C74/C91, and C79/C93.

This sequence belongs to the conotoxin D superfamily. As to quaternary structure, hetero-, homo- or pseudo-homodimer (identical sequence, different post-translational modifications). Heterodimer of [carboxy'Glu-49', hydroxy'Pro-55']Ms20.3 and [carboxyGlu-50, hydroxyPro-56]Ms20.5 may exist. In terms of tissue distribution, expressed by the venom duct.

Its subcellular location is the secreted. Its function is as follows. Alpha-conotoxins act on postsynaptic membranes, they bind to the nicotinic acetylcholine receptors (nAChR) and thus inhibit them. Through its two C-terminal domains, this homodimeric protein would bind to two nAChR allosteric sites, located outside the nAChR C-loop of the principal binding face and at the adjacent binding interface in a clockwise direction. This toxin specifically blocks mammalian neuronal nAChR of the alpha-7/CHRNA7, alpha-3-beta-2/CHRNA3-CHRNB2 and alpha-4-beta-2/CHRNA4-CHRNB2 subtypes. The chain is Alpha-conotoxin-like Ms20.5 from Conus mustelinus (Weasel cone).